The primary structure comprises 306 residues: Heme A synthase (306 aa).

The Cytoplasmic segment spans residues 1 to 5; it reads MKALR. Residues 6-26 form a helical membrane-spanning segment; that stretch reads AVSLANTAVMLLAVLWGAWVT. Residues 27-56 lie on the Extracellular side of the membrane; it reads SSDSGDGCGASWPLCKGTFMPDWDYAAIVE. C34 and C41 form a disulfide bridge. E56 is a catalytic residue. Residues 57 to 77 form a helical membrane-spanning segment; that stretch reads FGHRVVSALAGLLSVAVLVWV. H59 serves as a coordination point for heme o. Topologically, residues 78–89 are cytoplasmic; it reads ARVRPSETRLKR. The chain crosses the membrane as a helical span at residues 90–110; sequence LAFGTFFFVVLQGGLGAAAVL. The Extracellular portion of the chain corresponds to 111-116; the sequence is RPQPDL. A helical membrane pass occupies residues 117–137; the sequence is VMALHFGFSLLCFTFALLVTV. H121 serves as a coordination point for heme o. Residues 138–164 are Cytoplasmic-facing; it reads ALGQGERAAFQRPDVSAQPVAPGLRTQ. A helical transmembrane segment spans residues 165–185; it reads IWGLAVYTYLVVYLGAYVRHL. Over 186–206 the chain is Extracellular; it reads GASMACTGWPLCNGELIPPLY. C191 and C197 are joined by a disulfide. Residues 207 to 227 traverse the membrane as a helical segment; that stretch reads GPVGANFAHRLGAALAVVLVL. Residue H215 coordinates heme b. The Cytoplasmic portion of the chain corresponds to 228–247; sequence RLWWTARRLTERDDLRRGAA. A helical transmembrane segment spans residues 248 to 268; the sequence is WALALMAAQVASGALFPLGYL. Residues 269–277 lie on the Extracellular side of the membrane; sequence NLLTQLLHT. Position 276 (H276) interacts with heme b. A helical transmembrane segment spans residues 278-298; that stretch reads GLITGFWGVLSYLCYLTLPVG. Over 299 to 306 the chain is Cytoplasmic; it reads RETVAVSA.

Belongs to the COX15/CtaA family. Type 1 subfamily. As to quaternary structure, interacts with CtaB. Requires heme b as cofactor.

The protein localises to the cell membrane. The enzyme catalyses Fe(II)-heme o + 2 A + H2O = Fe(II)-heme a + 2 AH2. It participates in porphyrin-containing compound metabolism; heme A biosynthesis; heme A from heme O: step 1/1. Catalyzes the conversion of heme O to heme A by two successive hydroxylations of the methyl group at C8. The first hydroxylation forms heme I, the second hydroxylation results in an unstable dihydroxymethyl group, which spontaneously dehydrates, resulting in the formyl group of heme A. This chain is Heme A synthase, found in Symbiobacterium thermophilum (strain DSM 24528 / JCM 14929 / IAM 14863 / T).